The chain runs to 189 residues: Elongation factor P (189 aa).

The protein belongs to the elongation factor P family.

It is found in the cytoplasm. It functions in the pathway protein biosynthesis; polypeptide chain elongation. Functionally, involved in peptide bond synthesis. Stimulates efficient translation and peptide-bond synthesis on native or reconstituted 70S ribosomes in vitro. Probably functions indirectly by altering the affinity of the ribosome for aminoacyl-tRNA, thus increasing their reactivity as acceptors for peptidyl transferase. The protein is Elongation factor P of Rhizobium etli (strain ATCC 51251 / DSM 11541 / JCM 21823 / NBRC 15573 / CFN 42).